The primary structure comprises 95 residues: Co-chaperonin GroES (95 aa).

This sequence belongs to the GroES chaperonin family. In terms of assembly, heptamer of 7 subunits arranged in a ring. Interacts with the chaperonin GroEL.

It is found in the cytoplasm. In terms of biological role, together with the chaperonin GroEL, plays an essential role in assisting protein folding. The GroEL-GroES system forms a nano-cage that allows encapsulation of the non-native substrate proteins and provides a physical environment optimized to promote and accelerate protein folding. GroES binds to the apical surface of the GroEL ring, thereby capping the opening of the GroEL channel. This Rickettsia bellii (strain RML369-C) protein is Co-chaperonin GroES.